The sequence spans 472 residues: 3-isopropylmalate dehydratase large subunit (472 aa).

[4Fe-4S] cluster contacts are provided by Cys-347, Cys-407, and Cys-410.

This sequence belongs to the aconitase/IPM isomerase family. LeuC type 1 subfamily. In terms of assembly, heterodimer of LeuC and LeuD. The cofactor is [4Fe-4S] cluster.

It carries out the reaction (2R,3S)-3-isopropylmalate = (2S)-2-isopropylmalate. It functions in the pathway amino-acid biosynthesis; L-leucine biosynthesis; L-leucine from 3-methyl-2-oxobutanoate: step 2/4. Its function is as follows. Catalyzes the isomerization between 2-isopropylmalate and 3-isopropylmalate, via the formation of 2-isopropylmaleate. This is 3-isopropylmalate dehydratase large subunit from Synechococcus sp. (strain CC9605).